The primary structure comprises 112 residues: Nucleoid-associated protein lpp2803 (112 aa).

Belongs to the YbaB/EbfC family. Homodimer.

It is found in the cytoplasm. The protein resides in the nucleoid. Functionally, binds to DNA and alters its conformation. May be involved in regulation of gene expression, nucleoid organization and DNA protection. The polypeptide is Nucleoid-associated protein lpp2803 (Legionella pneumophila (strain Paris)).